The primary structure comprises 941 residues: Zinc finger protein su(Hw) (941 aa).

Disordered stretches follow at residues M1–A97 and E176–Q211. Low complexity predominate over residues S47–S57. Residues V185 to D202 show a composition bias toward acidic residues. The residue at position 186 (T186) is a Phosphothreonine. The segment at H220–C242 adopts a C2H2-type 1; atypical zinc-finger fold. A C2H2-type 2 zinc finger spans residues I290–H313. Residues F319–H341 form a C2H2-type 3; atypical zinc finger. C2H2-type zinc fingers lie at residues Y348–H366, M380–H402, Y413–H435, F441–H463, Y469–H491, H497–H519, F523–H545, F553–H577, and T596–H619. The tract at residues I760–L860 is interaction with mod(mdg4). The tract at residues D864–A941 is disordered. Composition is skewed to basic and acidic residues over residues G869 to D880 and K891 to A941.

In terms of assembly, component of the gypsy chromatin insulator complex, composed of Cp190, mod(mdg4) and su(Hw). The gypsy chromatin insulator complex interacts with Topors via mod(mdg4) and su(Hw). Upon ecdysone stimulation, interacts with Nup98.

The protein resides in the nucleus. Its subcellular location is the chromosome. Component of the gypsy chromatin insulator complex which is required for the function of the gypsy chromatin insulator and other endogenous chromatin insulators. Chromatin insulators are regulatory elements which establish independent domains of transcriptional activity within eukaryotic genomes. Insulators have two defining properties; they can block the communication between an enhancer and a promoter when placed between them and can also buffer transgenes from position effect variegation (PEV). Insulators are proposed to structure the chromatin fiber into independent domains of differing transcriptional potential by promoting the formation of distinct chromatin loops. This chromatin looping may involve the formation of insulator bodies, where homotypic interactions between individual subunits of the insulator complex could promote the clustering of widely spaced insulators at the nuclear periphery. Within the gypsy insulator complex, this protein binds specifically to a region of the gypsy element located 3' of the 5' long terminal repeat (LTR), and may also mediate interaction with other endogenous insulators at sites distinct from those recognized by Cp190. Cooperates with pita and cliff to recruit Cp190 and regulate insulator function at the front-ultraabdominal (Fub) boundary. The polypeptide is Zinc finger protein su(Hw) (Drosophila melanogaster (Fruit fly)).